Consider the following 404-residue polypeptide: Multidrug resistance protein MdtG (404 aa).

Transmembrane regions (helical) follow at residues 19–39 (LGCF…PLYV), 56–76 (LVFS…GGLA), 90–110 (LGMA…QFLI), 113–133 (ALLG…ATQV), 144–164 (TLST…GLLA), 171–191 (PVFF…FFFI), 222–242 (LFVT…ILTL), 254–274 (IAFI…LSAP), 288–308 (ILIV…FVQT), 317–337 (FLLG…LVYN), and 376–396 (AVFC…WNSL).

The protein belongs to the major facilitator superfamily. DHA1 family. MdtG (TC 2.A.1.2.20) subfamily.

Its subcellular location is the cell inner membrane. The polypeptide is Multidrug resistance protein MdtG (Salmonella agona (strain SL483)).